The sequence spans 309 residues: Glutaminase (309 aa).

Substrate is bound by residues Ser64, Asn114, Glu160, Asn167, Tyr191, Tyr243, and Val261.

It belongs to the glutaminase family. Homotetramer.

It carries out the reaction L-glutamine + H2O = L-glutamate + NH4(+). This Methylobacterium sp. (strain 4-46) protein is Glutaminase.